A 423-amino-acid chain; its full sequence is SH2 domain-containing protein 5 (423 aa).

The 119-residue stretch at alanine 28–tyrosine 146 folds into the PID domain. The SH2 domain occupies tryptophan 296–tyrosine 392. The interval tyrosine 392–glycine 423 is disordered.

In terms of assembly, interacts with BCR.

The protein localises to the postsynaptic density. Functionally, may be involved in synaptic plasticity regulation through the control of Rac-GTP levels. This chain is SH2 domain-containing protein 5, found in Homo sapiens (Human).